Here is a 1163-residue protein sequence, read N- to C-terminus: MKSALHQIGKTSLAAALSGAVLLSAQTTHAAALSVSQQPLMLIQGVAPNMLVTLDDSGSMAYAYAPDSLVNSRNNVYFASNSYNPMYFDPNTQYKLPKKVTLSNGQIQVQDYSKPSFTAAWRNGFTQEGRVNLSRDYRPTVQYQGGSGAGTESSIDWYGAPAFYYQYSGGRGCSLTTSSCYTRVEISGAAQQQNFANWYSFYRTRALATQTAANLAFYSLPENARISWQLLNSSSCLIGSGSSNCYNNYLRDFTGQHRVNFFNWLENLSVGGGTPLRQAMTRAGEFLKKTGVNGPYAYRPGTQTSPEYSCRGSYHILMTDGLWNNDSASVGNADSTSRSLPDGKSYSSQTPYRDAASNTLADQAFHYWATDARPDIDDNIKPYIPYPDQANPSAEYWNPRNDPATWQHMVTYTLGLGLTTSLTSPKWEGSTYSGGYDEIAAGRLSWPNASNNHSNNVYDLWHAAVNSRGEFFSADSPDQLVAAFQDILNRISGKDLPASRPAISSSLQEDDTGDKLTRFAYQTSFASDKNWAGDLTRYSLTTQDKATVQTKLWSAQSILDAMPNGGAGRKIMMAGSGTSGLKEFTWGSLSADQQRQLNRDPDRNDVADTKGQDRVAFLRGDRSKENSDNFRTRNSILGDIINSSPATVGKAQYLTYLAQPIEPSGNYSTFAEAQKTRAPRVYVGANDGMLHGFDTDGNETFAFIPSAVFEKLHKLTARGYQGGAHQFYVDGSPVVADAFFGGAWHTVLIGSLRAGGKGLFALDVTDPANIKLLWEIGVDQEPDLGYSFPKPTVARLHNGKWAVVTGNGYSSLNDKAALLIIDLETGAITRKLEVTGRTGVPNGLSSPRLADNNSDGVADYAYAGDLQGNLWRFDLIAGKVNQDDPFSRANDGPAVASSFRVSFGGQPLYSAVDSAGAAQAITAAPSLVRHPTRKGYIVIFGTGKYFENADARADTSRAQTLYGIWDQQTKGEAAGSTPRLTRGNLQQQTLDLQADSTFASTARTIRIASQNPVNWLNNDGSTKQSGWYLDFMVNGTLKGEMLIEDMIAIGQVVLLQTITPNDDPCADGASNWTYGLDPYTGGRTSFTVFDLARQGVVDSKSDYSYNKQNVAVSGTEQKGLGGLTLSTNEQGNPEVCSSGECLTVNPGPNTRGRQNWRPIEGKN.

An N-terminal signal peptide occupies residues 1–30 (MKSALHQIGKTSLAAALSGAVLLSAQTTHA). The segment at 329 to 352 (SVGNADSTSRSLPDGKSYSSQTPY) is disordered. The Ca(2+) site is built by D600, D602, N604, and D608. Residues 619-621 (RGD) form an integrin-binding motif RGD region. Ca(2+) contacts are provided by D851, N853, D855, V857, and D859. The segment at 1138-1163 (SGECLTVNPGPNTRGRQNWRPIEGKN) is disordered.

The protein belongs to the PilY1 family. As to quaternary structure, interacts (via C-terminal 532-1163) with host integrins alpha-V/beta-3 (ITGAV/ITGB3) and alpha-V/beta-5 (ITGAV/ITGB5).

Its subcellular location is the fimbrium. The protein localises to the membrane. It is found in the cytoplasm. It localises to the cytosol. Functionally, involved in pilus assembly, twitching motility and adhesion to host cells. Primes type IV pili (T4P) assembly and is required for inclusion of minor pilins PilV, PilW and PilX to the surface pili. Stabilizes assembled pilus fibers likely by antagonizing retraction mediated by PilT. Calcium-binding and calcium release by PilY1 seem to be essential for twitching motility and for regulation of pilus retraction dynamics of PilT. Adhesin for human tissue specifically recognizing a host receptor localized or enriched on basolateral epithelial cell surfaces. Binds host integrins in an calcium-dependent manner in vitro and this interaction may be employed by the bacterium to mediate host epithelial cell binding in vivo. The polypeptide is Type IV pilus biogenesis factor PilY1 (Pseudomonas aeruginosa (strain PAK)).